A 509-amino-acid chain; its full sequence is Protein disulfide-isomerase (509 aa).

A signal peptide spans 1-18 (MLRRAVLCLALAVTAGWA). The region spanning 19 to 135 (WAAEEEDNVL…IVNWLKKRTG (117 aa)) is the Thioredoxin 1 domain. Catalysis depends on nucleophile residues Cys54 and Cys57. A disulfide bridge links Cys54 with Cys57. N6-succinyllysine occurs at positions 223 and 272. Phosphoserine occurs at positions 332 and 358. One can recognise a Thioredoxin 2 domain in the interval 347–476 (FLEGKIKPHL…FKKFLESGGQ (130 aa)). Residues Cys398 and Cys401 each act as nucleophile in the active site. A disulfide bridge connects residues Cys398 and Cys401. Ser428 carries the phosphoserine modification. The interval 471 to 509 (LESGGQDGAGDEDGLEDLEEAEEPDLEEDDDQKAVRDEL) is disordered. The span at 479–501 (AGDEDGLEDLEEAEEPDLEEDDD) shows a compositional bias: acidic residues. The short motif at 506 to 509 (RDEL) is the Prevents secretion from ER element.

It belongs to the protein disulfide isomerase family. Heterodimer; heterodimerizes with the protein microsomal triglyceride transfer MTTP. Homodimer. Monomers and homotetramers may also occur. Interacts with P4HA2, forming a heterotetramer consisting of 2 alpha subunits (P4HA2) and 2 beta (P4HB), where P4HB plays the role of a structural subunit; this tetramer catalyzes the formation of 4-hydroxyproline in collagen. Also constitutes the structural subunit of the microsomal triacylglycerol transfer protein MTTP in mammalian cells. Stabilizes both enzymes and retain them in the ER without contributing to the catalytic activity. Binds UBQLN1. Interacts with ERO1B. Interacts with ILDR2. Interacts with ERN1/IRE1A (via N-terminus); the interaction is enhanced by phosphorylation of P4HB by FAM20C in response to endoplasmic reticulum stress and results in attenuation of ERN1 activity. In terms of processing, phosphorylation of Ser-358 by FAM20C is induced by endoplasmic reticulum stress and results in a functional switch from oxidoreductase to molecular chaperone. It also promotes interaction with ERN1.

It is found in the endoplasmic reticulum. It localises to the endoplasmic reticulum lumen. The protein localises to the melanosome. The protein resides in the cell membrane. The enzyme catalyses Catalyzes the rearrangement of -S-S- bonds in proteins.. In terms of biological role, this multifunctional protein catalyzes the formation, breakage and rearrangement of disulfide bonds. At the cell surface, seems to act as a reductase that cleaves disulfide bonds of proteins attached to the cell. May therefore cause structural modifications of exofacial proteins. Inside the cell, seems to form/rearrange disulfide bonds of nascent proteins. At high concentrations and following phosphorylation by FAM20C, functions as a chaperone that inhibits aggregation of misfolded proteins. At low concentrations, facilitates aggregation (anti-chaperone activity). May be involved with other chaperones in the structural modification of the TG precursor in hormone biogenesis. Also acts as a structural subunit of various enzymes such as prolyl 4-hydroxylase and microsomal triacylglycerol transfer protein MTTP. Receptor for LGALS9; the interaction retains P4HB at the cell surface of Th2 T helper cells, increasing disulfide reductase activity at the plasma membrane, altering the plasma membrane redox state and enhancing cell migration. This chain is Protein disulfide-isomerase (P4HB), found in Oryctolagus cuniculus (Rabbit).